The primary structure comprises 377 residues: Serine protease grass (377 aa).

An N-terminal signal peptide occupies residues 1-26 (MMIASSLAVLYGIAIVSSMGVQSARA). The 59-residue stretch at 31-89 (DCTTPDGDQGQCMPFSSCRTIEERLTEAQKAGQKVPADYASYLQKALCGEFNGVRHFCC) folds into the Clip domain. 6 disulfides stabilise this stretch: C32/C88, C42/C78, C48/C89, C111/C243, C148/C164, and C188/C197. Residues 91–118 (SANIQHNSKVMSLFKDENFDCGNFLSQR) are linker. The 255-residue stretch at 119-373 (VSNGYEVKLS…YVQWITDTMA (255 aa)) folds into the Peptidase S1 domain. H163 serves as the catalytic Charge relay system. 4 residues coordinate Ca(2+): E179, R181, T184, and D187. Catalysis depends on D223, which acts as the Charge relay system. N-linked (GlcNAc...) asparagine glycans are attached at residues N230 and N270. Intrachain disulfides connect C290/C304 and C314/C349. S318 functions as the Charge relay system in the catalytic mechanism.

The protein belongs to the peptidase S1 family. CLIP subfamily. In terms of processing, proteolytically cleaved by a tryspin-like protease which is likely to activate grass.

Its subcellular location is the secreted. Functionally, endopeptidase. Plays a key role in innate immunity by activating the Toll pathway in response to fungal and Gram-positive bacterial infections, presumably downstream of pattern-recognition receptors (PRR), such as PGRP-SA, GNBP1 and GNBP3, and upstream of spz processing enzyme SPE. In Drosophila melanogaster (Fruit fly), this protein is Serine protease grass.